The sequence spans 729 residues: Sodium-dependent neutral amino acid transporter B(0)AT2 (729 aa).

Residues 1 to 69 (MPKNSKVVKR…ERPAWNSKLQ (69 aa)) lie on the Cytoplasmic side of the membrane. A phosphoserine mark is found at serine 25 and serine 55. The tract at residues 42–61 (DVQEEKDTDAEDGSEADDER) is disordered. Positions 43 to 59 (VQEEKDTDAEDGSEADD) are enriched in acidic residues. A run of 3 helical transmembrane segments spans residues 70–90 (YILA…FPYL), 98–117 (AYLL…LFFL), and 142–162 (GIGF…NVII). Residues 163–225 (GWTLFYFSQS…SSISDSGGLN (63 aa)) are Extracellular-facing. N-linked (GlcNAc...) asparagine glycosylation occurs at asparagine 187. Helical transmembrane passes span 226-244 (WKMT…LAMI) and 253-270 (IMYF…CFLI). Residue asparagine 276 is glycosylated (N-linked (GlcNAc...) asparagine). Transmembrane regions (helical) follow at residues 306 to 323 (VFFA…FSSY) and 335 to 356 (VLVS…FAVL). The Extracellular portion of the chain corresponds to 357-452 (GFKANIVNEK…FIAFTEAMTH (96 aa)). 2 N-linked (GlcNAc...) asparagine glycosylation sites follow: asparagine 383 and asparagine 394. The next 5 helical transmembrane spans lie at 453–472 (FPAS…NLGL), 496–514 (ILTV…IFVQ), 530–550 (TLPL…VYGI), 571–592 (YMWK…IVNM), and 620–642 (VVCF…IRRC). Over 643 to 729 (NLIDDSSGNL…DMPDMPESDL (87 aa)) the chain is Cytoplasmic. Serine 687, serine 699, and serine 701 each carry phosphoserine.

Belongs to the sodium:neurotransmitter symporter (SNF) (TC 2.A.22) family. SLC6A15 subfamily. Significant expressed in brain, lung and kidney. In brain, mainly expressed int the cortex, the cerebellum and the brain stem.

The protein resides in the membrane. The catalysed reaction is L-pipecolate(in) + Na(+)(in) = L-pipecolate(out) + Na(+)(out). It catalyses the reaction L-leucine(in) + Na(+)(in) = L-leucine(out) + Na(+)(out). The enzyme catalyses L-isoleucine(in) + Na(+)(in) = L-isoleucine(out) + Na(+)(out). It carries out the reaction L-methionine(in) + Na(+)(in) = L-methionine(out) + Na(+)(out). The catalysed reaction is L-proline(in) + Na(+)(in) = L-proline(out) + Na(+)(out). It catalyses the reaction L-alanine(in) + Na(+)(in) = L-alanine(out) + Na(+)(out). The enzyme catalyses L-asparagine(in) + Na(+)(in) = L-asparagine(out) + Na(+)(out). It carries out the reaction L-valine(in) + Na(+)(in) = L-valine(out) + Na(+)(out). The catalysed reaction is L-cysteine(in) + Na(+)(in) = L-cysteine(out) + Na(+)(out). It catalyses the reaction L-glutamine(in) + Na(+)(in) = L-glutamine(out) + Na(+)(out). The enzyme catalyses L-serine(in) + Na(+)(in) = L-serine(out) + Na(+)(out). It carries out the reaction L-threonine(in) + Na(+)(in) = L-threonine(out) + Na(+)(out). The catalysed reaction is L-phenylalanine(in) + Na(+)(in) = L-phenylalanine(out) + Na(+)(out). In terms of biological role, functions as a sodium-dependent neutral amino acid transporter. Exhibits preference for methionine and for the branched-chain amino acids, particularly leucine, valine and isoleucine. Can also transport low-affinity substrates such as alanine, phenylalanine, glutamine and pipecolic acid. Mediates the saturable, pH-sensitive and electrogenic cotransport of proline and sodium ions with a stoichiometry of 1:1. May have a role as transporter for neurotransmitter precursors into neurons. In contrast to other members of the neurotransmitter transporter family, does not appear to be chloride-dependent. The chain is Sodium-dependent neutral amino acid transporter B(0)AT2 (Slc6a15) from Mus musculus (Mouse).